Reading from the N-terminus, the 658-residue chain is Integrator complex subunit 9 (658 aa).

Residue lysine 58 forms a Glycyl lysine isopeptide (Lys-Gly) (interchain with G-Cter in SUMO2) linkage. Positions 548 to 573 (DNKHVLQPPPRPTQPTGGKKRKRASD) are disordered. Residues 566-570 (KKRKR) carry the Nuclear localization signal motif.

The protein belongs to the metallo-beta-lactamase superfamily. RNA-metabolizing metallo-beta-lactamase-like family. INTS9 subfamily. Component of the Integrator complex, composed of core subunits INTS1, INTS2, INTS3, INTS4, INTS5, INTS6, INTS7, INTS8, INTS9/RC74, INTS10, INTS11/CPSF3L, INTS12, INTS13, INTS14 and INTS15. The core complex associates with protein phosphatase 2A subunits PPP2CA and PPP2R1A, to form the Integrator-PP2A (INTAC) complex. INTS9 is part of the RNA endonuclease subcomplex, composed of INTS4, INTS9, INTS11 and inositol hexakisphosphate (InsP6). Interacts with WDR73; interaction is required for the assembly of the RNA endonuclease subcomplex in the cytoplasm. Interacts with BRAT1; interaction is required for the assembly of the RNA endonuclease subcomplex. Interacts with ESRRB, ESRRB is not a core component of the Integrator complex and this association is a bridge for the interaction with the multiprotein complex Integrator; attracts the transcriptional machinery.

It localises to the nucleus. Its subcellular location is the cytoplasm. Its function is as follows. Component of the integrator complex, a multiprotein complex that terminates RNA polymerase II (Pol II) transcription in the promoter-proximal region of genes. The integrator complex provides a quality checkpoint during transcription elongation by driving premature transcription termination of transcripts that are unfavorably configured for transcriptional elongation: the complex terminates transcription by (1) catalyzing dephosphorylation of the C-terminal domain (CTD) of Pol II subunit POLR2A/RPB1 and SUPT5H/SPT5, (2) degrading the exiting nascent RNA transcript via endonuclease activity and (3) promoting the release of Pol II from bound DNA. The integrator complex is also involved in terminating the synthesis of non-coding Pol II transcripts, such as enhancer RNAs (eRNAs), small nuclear RNAs (snRNAs), telomerase RNAs and long non-coding RNAs (lncRNAs). Mediates recruitment of cytoplasmic dynein to the nuclear envelope, probably as component of the integrator complex. This is Integrator complex subunit 9 (INTS9) from Bos taurus (Bovine).